Consider the following 245-residue polypeptide: 1-(5-phosphoribosyl)-5-[(5-phosphoribosylamino)methylideneamino] imidazole-4-carboxamide isomerase (245 aa).

The Proton acceptor role is filled by D7. D129 (proton donor) is an active-site residue.

This sequence belongs to the HisA/HisF family.

It localises to the cytoplasm. The catalysed reaction is 1-(5-phospho-beta-D-ribosyl)-5-[(5-phospho-beta-D-ribosylamino)methylideneamino]imidazole-4-carboxamide = 5-[(5-phospho-1-deoxy-D-ribulos-1-ylimino)methylamino]-1-(5-phospho-beta-D-ribosyl)imidazole-4-carboxamide. It functions in the pathway amino-acid biosynthesis; L-histidine biosynthesis; L-histidine from 5-phospho-alpha-D-ribose 1-diphosphate: step 4/9. This Salmonella enteritidis PT4 (strain P125109) protein is 1-(5-phosphoribosyl)-5-[(5-phosphoribosylamino)methylideneamino] imidazole-4-carboxamide isomerase.